We begin with the raw amino-acid sequence, 285 residues long: Acetylglutamate kinase (285 aa).

Substrate is bound by residues 64–65, arginine 86, and asparagine 180; that span reads GG.

This sequence belongs to the acetylglutamate kinase family. ArgB subfamily.

Its subcellular location is the plastid. The protein localises to the chloroplast. The enzyme catalyses N-acetyl-L-glutamate + ATP = N-acetyl-L-glutamyl 5-phosphate + ADP. It functions in the pathway amino-acid biosynthesis; L-arginine biosynthesis; N(2)-acetyl-L-ornithine from L-glutamate: step 2/4. Its function is as follows. Catalyzes the ATP-dependent phosphorylation of N-acetyl-L-glutamate. This chain is Acetylglutamate kinase, found in Gracilaria tenuistipitata var. liui (Red alga).